A 60-amino-acid chain; its full sequence is Mastoparan-VT1 (60 aa).

Residues 1-25 (MKNTILILFTAFIALLGFFGMSAEA) form the signal peptide. Residues 26 to 45 (LADLKADPLAGPNPDADPEA) constitute a propeptide that is removed on maturation. AXPX repeat units follow at residues 31–34 (ADPL), 35–38 (AGPN), and 41–44 (ADPE). Leucine amide is present on leucine 59.

It belongs to the MCD family. Mastoparan subfamily. In terms of tissue distribution, expressed by the venom gland.

The protein localises to the secreted. Antimicrobial peptide with activities against Gram-negative and Gram-positive bacteria and the fungi C.albicans and C.parapsilosis. Exhibits little hemolytic activity against washed human erythrocytes. Also acts as a mast cell degranulating peptide. Its mast cell degranulation activity may be related to the activation of G-protein coupled receptors in mast cells as well as interaction with other proteins located in cell endosomal membranes in the mast cells. In terms of biological role, antimicrobial peptide with activities against Gram-negative and Gram-positive bacteria and the fungi C.albicans and C.parapsilosis. Exhibits little hemolytic activity against washed human erythrocytes. Also acts as a mast cell degranulating peptide. In Vespa tropica (Greater banded hornet), this protein is Mastoparan-VT1.